Reading from the N-terminus, the 147-residue chain is Large ribosomal subunit protein uL15 (147 aa).

Positions 1 to 28 (MIRRRKKVRKLRGSHTHGWGCKKKHRGG) are enriched in basic residues. The disordered stretch occupies residues 1-43 (MIRRRKKVRKLRGSHTHGWGCKKKHRGGGSKGGRGMAGTGKRN). Over residues 29–38 (GSKGGRGMAG) the composition is skewed to gly residues.

Belongs to the universal ribosomal protein uL15 family. Part of the 50S ribosomal subunit.

In terms of biological role, binds to the 23S rRNA. The protein is Large ribosomal subunit protein uL15 of Pyrococcus abyssi (strain GE5 / Orsay).